Reading from the N-terminus, the 668-residue chain is DNA ligase (668 aa).

Residues 37–41, 86–87, and E116 each bind NAD(+); these read DNVYD and SM. The active-site N6-AMP-lysine intermediate is K118. NAD(+) contacts are provided by R139, E173, K288, and K312. Residues C406, C409, C424, and C429 each coordinate Zn(2+). The 78-residue stretch at 591–668 folds into the BRCT domain; it reads IPDNPFKDKT…TEEEAIAQIK (78 aa).

This sequence belongs to the NAD-dependent DNA ligase family. LigA subfamily. Requires Mg(2+) as cofactor. The cofactor is Mn(2+).

The catalysed reaction is NAD(+) + (deoxyribonucleotide)n-3'-hydroxyl + 5'-phospho-(deoxyribonucleotide)m = (deoxyribonucleotide)n+m + AMP + beta-nicotinamide D-nucleotide.. In terms of biological role, DNA ligase that catalyzes the formation of phosphodiester linkages between 5'-phosphoryl and 3'-hydroxyl groups in double-stranded DNA using NAD as a coenzyme and as the energy source for the reaction. It is essential for DNA replication and repair of damaged DNA. The chain is DNA ligase from Lactobacillus acidophilus (strain ATCC 700396 / NCK56 / N2 / NCFM).